We begin with the raw amino-acid sequence, 533 residues long: Chromosomal replication initiator protein DnaA (533 aa).

Positions 1-72 are domain I, interacts with DnaA modulators; that stretch reads MNDFWQHCSA…DLARDFWNAP (72 aa). The segment at 72 to 196 is domain II; that stretch reads PIEVQFVLDP…EAADSMYERS (125 aa). The interval 83–113 is disordered; sequence AGQRSPAGATPLAPRAPLPSANPAPVAPGPA. The span at 96–110 shows a compositional bias: pro residues; sequence PRAPLPSANPAPVAP. Residues 197 to 413 form a domain III, AAA+ region region; that stretch reads KLNPVLTFDN…GALRKILAYS (217 aa). Residues Gly-241, Gly-243, Lys-244, and Thr-245 each coordinate ATP. Positions 414–533 are domain IV, binds dsDNA; sequence KFHGREITIE…LHVLEQTLKG (120 aa).

It belongs to the DnaA family. As to quaternary structure, oligomerizes as a right-handed, spiral filament on DNA at oriC.

It is found in the cytoplasm. Functionally, plays an essential role in the initiation and regulation of chromosomal replication. ATP-DnaA binds to the origin of replication (oriC) to initiate formation of the DNA replication initiation complex once per cell cycle. Binds the DnaA box (a 9 base pair repeat at the origin) and separates the double-stranded (ds)DNA. Forms a right-handed helical filament on oriC DNA; dsDNA binds to the exterior of the filament while single-stranded (ss)DNA is stabiized in the filament's interior. The ATP-DnaA-oriC complex binds and stabilizes one strand of the AT-rich DNA unwinding element (DUE), permitting loading of DNA polymerase. After initiation quickly degrades to an ADP-DnaA complex that is not apt for DNA replication. Binds acidic phospholipids. The chain is Chromosomal replication initiator protein DnaA from Burkholderia mallei (strain SAVP1).